A 292-amino-acid chain; its full sequence is MAAITASMVAELRAKTDAPMMECKKALTEADGDLNKAEELLRVKLGNKASKAASRVTAEGVVAAFIDGTTGALVELNCETDFVSKNDDFLAFSAKVAELVAKQNPADVAALSALEIDGVSVEATRTALIGKIGENMTIRRFARYANGGKLVSYLHGTRIGVMVEFDGDEAAAKDVAMHVAAMKPVSLSAEQVPADLIAKERSIAEQKAAESGKPAEIAAKMVEGSVQKYLKEVSLFNQPFVKNDKQTVEQMLKAANTTVKSFTLYVVGEGIEKKQDDFAAEVAAQVAAAQKG.

The interval 80 to 83 (TDFV) is involved in Mg(2+) ion dislocation from EF-Tu.

It belongs to the EF-Ts family.

Its subcellular location is the cytoplasm. In terms of biological role, associates with the EF-Tu.GDP complex and induces the exchange of GDP to GTP. It remains bound to the aminoacyl-tRNA.EF-Tu.GTP complex up to the GTP hydrolysis stage on the ribosome. The protein is Elongation factor Ts of Cupriavidus taiwanensis (strain DSM 17343 / BCRC 17206 / CCUG 44338 / CIP 107171 / LMG 19424 / R1) (Ralstonia taiwanensis (strain LMG 19424)).